The sequence spans 261 residues: Ribonuclease PH (261 aa).

Phosphate contacts are provided by residues Arg-86 and Gly-124–Arg-126.

It belongs to the RNase PH family. As to quaternary structure, homohexameric ring arranged as a trimer of dimers.

It carries out the reaction tRNA(n+1) + phosphate = tRNA(n) + a ribonucleoside 5'-diphosphate. Its function is as follows. Phosphorolytic 3'-5' exoribonuclease that plays an important role in tRNA 3'-end maturation. Removes nucleotide residues following the 3'-CCA terminus of tRNAs; can also add nucleotides to the ends of RNA molecules by using nucleoside diphosphates as substrates, but this may not be physiologically important. Probably plays a role in initiation of 16S rRNA degradation (leading to ribosome degradation) during starvation. The polypeptide is Ribonuclease PH (Persephonella marina (strain DSM 14350 / EX-H1)).